Here is a 36-residue protein sequence, read N- to C-terminus: Probable non-specific lipid-transfer protein (36 aa).

The protein belongs to the plant LTP family. Phosphorylated by Ca(2+)-dependent protein kinase.

Its function is as follows. Plant non-specific lipid-transfer proteins transfer phospholipids as well as galactolipids across membranes. May play a role in wax or cutin deposition in the cell walls of expanding epidermal cells and certain secretory tissues. This Pinus pinea (Italian stone pine) protein is Probable non-specific lipid-transfer protein.